The following is a 100-amino-acid chain: Integration host factor subunit alpha (100 aa).

Residues 53-73 (FDLRDKRQRPGRNPKTGEEIP) are disordered.

This sequence belongs to the bacterial histone-like protein family. In terms of assembly, heterodimer of an alpha and a beta chain.

In terms of biological role, this protein is one of the two subunits of integration host factor, a specific DNA-binding protein that functions in genetic recombination as well as in transcriptional and translational control. The sequence is that of Integration host factor subunit alpha from Pseudomonas aeruginosa (strain LESB58).